Here is a 111-residue protein sequence, read N- to C-terminus: Estrogen receptor (111 aa).

Residues 1 to 42 (PSGYAVREAGPPAYYRPNSDNRRQGGRERLASTSDKGSMAVE) are disordered. A modulating region spans residues 1–49 (PSGYAVREAGPPAYYRPNSDNRRQGGRERLASTSDKGSMAVESAKETRY). The span at 19-30 (SDNRRQGGRERL) shows a compositional bias: basic and acidic residues. The residue at position 32 (serine 32) is a Phosphoserine. NR C4-type zinc fingers lie at residues 50-70 (CAVC…CEGC) and 86-110 (CPAT…LRKC). The segment at residues 50–111 (CAVCNDYASG…CQACRLRKCY (62 aa)) is a DNA-binding region (nuclear receptor).

The protein belongs to the nuclear hormone receptor family. NR3 subfamily. As to quaternary structure, binds DNA as a homodimer. Can form a heterodimer with ESR2. Interacts with coactivator NCOA5. Interacts with PELP1, the interaction is enhanced by 17-beta-estradiol; the interaction increases ESR1 transcriptional activity. Interacts with NCOA7; the interaction is ligand-inducible. Interacts with AKAP13, CUEDC2, HEXIM1, KDM5A, MAP1S, SMARD1, and UBE1C. Interacts with MUC1; the interaction is stimulated by 7 beta-estradiol (E2) and enhances ESR1-mediated transcription. Interacts with DNTTIP2, and UIMC1. Interacts with KMT2D/MLL2. Interacts with ATAD2; the interaction is enhanced by estradiol. Interacts with KIF18A and LDB1. Interacts with RLIM (via its C-terminus). Interacts with MACROD1. Interacts with SH2D4A and PLCG. Interacts with SH2D4A; the interaction blocks binding to PLCG and inhibits estrogen-induced cell proliferation. Interacts with DYNLL1. Interacts with CCDC62; the interaction requires estradiol and appears to enhance the transcription of target genes. Interacts with NR2C1; the interaction prevents homodimerization of ESR1 and suppresses its transcriptional activity and cell growth. Interacts with DNAAF4. Interacts with PRMT2. Interacts with RBFOX2. Interacts with EP300; the interaction is estrogen-dependent and enhanced by CITED1. Interacts with CITED1; the interaction is estrogen-dependent. Interacts with FAM120B, FOXL2, PHB2 and SLC30A9. Interacts with coactivators NCOA3 and NCOA6. Interacts with STK3/MST2 only in the presence of SAV1 and vice-versa. Binds to CSNK1D. Interacts with NCOA2; NCOA2 can interact with ESR1 AF-1 and AF-2 domains simultaneously and mediate their transcriptional synergy. Interacts with DDX5. Interacts with NCOA1; the interaction seems to require a self-association of N-terminal and C-terminal regions. Interacts with ZNF366, DDX17, NFKB1, RELA, SP1 and SP3. Interacts with NRIP1. Interacts with GPER1; the interaction occurs in an estrogen-dependent manner. Interacts with CLOCK and the interaction is stimulated by estrogen. Interacts with TRIP4 (ufmylated); estrogen dependent. Interacts with LMTK3; the interaction phosphorylates ESR1 (in vitro) and protects it against proteasomal degradation. Interacts with CCAR2 (via N-terminus) in a ligand-independent manner. Interacts with ZFHX3. Interacts with SFR1 in a ligand-dependent and -independent manner. Interacts with DCAF13, LATS1 and DCAF1; regulates ESR1 ubiquitination and ubiquitin-mediated proteasomal degradation. Interacts (via DNA-binding domain) with POU4F2 (C-terminus); this interaction increases the estrogen receptor ESR1 transcriptional activity in a DNA- and ligand 17-beta-estradiol-independent manner. Interacts with ESRRB isoform 1. Interacts with UBE3A and WBP2. Interacts with GTF2B. Interacts with RBM39. In the absence of hormonal ligand, interacts with TACC1. Interacts with PI3KR1 or PI3KR2 and PTK2/FAK1. Interacts with SRC. Interacts with BAG1; the interaction is promoted in the absence of estradiol (17-beta-estradiol/E2). Interacts with and ubiquitinated by STUB1; the interaction is promoted in the absence of estradiol (17-beta-estradiol/E2). Interacts with NEDD8. In terms of processing, ubiquitinated; regulated by LATS1 via DCAF1 it leads to ESR1 proteasomal degradation. Deubiquitinated by OTUB1. Ubiquitinated by STUB1/CHIP; in the CA1 hippocampal region following loss of endogenous circulating estradiol (17-beta-estradiol/E2). Ubiquitinated by UBR5, leading to its degradation: UBR5 specifically recognizes and binds ligand-bound ESR1 when it is not associated with coactivators (NCOAs). In presence of NCOAs, the UBR5-degron is not accessible, preventing its ubiquitination and degradation. Post-translationally, dimethylated by PRMT1. Demethylated by JMJD6. Palmitoylated by ZDHHC7 and ZDHHC21. This modification is required for plasma membrane targeting and for rapid intracellular signaling via ERK and AKT kinases and cAMP generation, but not for signaling mediated by the nuclear hormone receptor. In terms of processing, phosphorylated by cyclin A/CDK2 and CK1. Phosphorylation probably enhances transcriptional activity. Dephosphorylation by PPP5C inhibits its transactivation activity. Phosphorylated by LMTK3 (in vitro).

Its subcellular location is the nucleus. The protein resides in the cytoplasm. The protein localises to the golgi apparatus. It localises to the cell membrane. Its function is as follows. Nuclear hormone receptor. The steroid hormones and their receptors are involved in the regulation of eukaryotic gene expression and affect cellular proliferation and differentiation in target tissues. Ligand-dependent nuclear transactivation involves either direct homodimer binding to a palindromic estrogen response element (ERE) sequence or association with other DNA-binding transcription factors, such as AP-1/c-Jun, c-Fos, ATF-2, Sp1 and Sp3, to mediate ERE-independent signaling. Ligand binding induces a conformational change allowing subsequent or combinatorial association with multiprotein coactivator complexes through LXXLL motifs of their respective components. Mutual transrepression occurs between the estrogen receptor (ER) and NF-kappa-B in a cell-type specific manner. Decreases NF-kappa-B DNA-binding activity and inhibits NF-kappa-B-mediated transcription from the IL6 promoter and displace RELA/p65 and associated coregulators from the promoter. Recruited to the NF-kappa-B response element of the CCL2 and IL8 promoters and can displace CREBBP. Present with NF-kappa-B components RELA/p65 and NFKB1/p50 on ERE sequences. Can also act synergistically with NF-kappa-B to activate transcription involving respective recruitment adjacent response elements; the function involves CREBBP. Can activate the transcriptional activity of TFF1. Also mediates membrane-initiated estrogen signaling involving various kinase cascades. Essential for MTA1-mediated transcriptional regulation of BRCA1 and BCAS3. Maintains neuronal survival in response to ischemic reperfusion injury when in the presence of circulating estradiol (17-beta-estradiol/E2). The chain is Estrogen receptor (ESR1) from Ovis aries (Sheep).